Consider the following 122-residue polypeptide: Small ribosomal subunit protein uS13 (122 aa).

The interval 94–122 is disordered; that stretch reads SLPVRGQRTKTNARTRKVHVSRSKNSRGK.

The protein belongs to the universal ribosomal protein uS13 family. In terms of assembly, part of the 30S ribosomal subunit. Forms a loose heterodimer with protein S19. Forms two bridges to the 50S subunit in the 70S ribosome.

Located at the top of the head of the 30S subunit, it contacts several helices of the 16S rRNA. In the 70S ribosome it contacts the 23S rRNA (bridge B1a) and protein L5 of the 50S subunit (bridge B1b), connecting the 2 subunits; these bridges are implicated in subunit movement. Contacts the tRNAs in the A and P-sites. This chain is Small ribosomal subunit protein uS13, found in Haemophilus influenzae (strain ATCC 51907 / DSM 11121 / KW20 / Rd).